Consider the following 174-residue polypeptide: MMNPTNSRDVPLYIYHAGQCDPKKCTGRKMARFELARLYDKISRLPRSAILLDPMAEKALSPADDPKKGIIVLDCSWEEVERVFPELEKLNLEHRALPYMLAGNPVNFGRPFKLNSAEAFAAALYILGYKEQAEKVMSKFNWGHSFLELNREPLDEYATAKNSSEIVEIQSHYI.

Positions 26, 73, 97, and 116 each coordinate S-adenosyl-L-methionine.

Belongs to the TDD superfamily. TSR3 family.

It is found in the cytoplasm. The catalysed reaction is an N(1)-methylpseudouridine in rRNA + S-adenosyl-L-methionine = N(1)-methyl-N(3)-[(3S)-3-amino-3-carboxypropyl]pseudouridine in rRNA + S-methyl-5'-thioadenosine + H(+). Functionally, aminocarboxypropyltransferase that catalyzes the aminocarboxypropyl transfer on pseudouridine corresponding to position 914 in M.jannaschii 16S rRNA. It constitutes the last step in biosynthesis of the hypermodified N1-methyl-N3-(3-amino-3-carboxypropyl) pseudouridine (m1acp3-Psi). This Methanosarcina acetivorans (strain ATCC 35395 / DSM 2834 / JCM 12185 / C2A) protein is 16S rRNA aminocarboxypropyltransferase.